The chain runs to 158 residues: NADH-quinone oxidoreductase subunit B (158 aa).

[4Fe-4S] cluster contacts are provided by Cys37, Cys38, Cys102, and Cys132.

The protein belongs to the complex I 20 kDa subunit family. In terms of assembly, NDH-1 is composed of 14 different subunits. Subunits NuoB, C, D, E, F, and G constitute the peripheral sector of the complex. The cofactor is [4Fe-4S] cluster.

It is found in the cell inner membrane. It catalyses the reaction a quinone + NADH + 5 H(+)(in) = a quinol + NAD(+) + 4 H(+)(out). Functionally, NDH-1 shuttles electrons from NADH, via FMN and iron-sulfur (Fe-S) centers, to quinones in the respiratory chain. Couples the redox reaction to proton translocation (for every two electrons transferred, four hydrogen ions are translocated across the cytoplasmic membrane), and thus conserves the redox energy in a proton gradient. The sequence is that of NADH-quinone oxidoreductase subunit B from Bordetella parapertussis (strain 12822 / ATCC BAA-587 / NCTC 13253).